Reading from the N-terminus, the 349-residue chain is D-alanine--D-alanine ligase (349 aa).

The region spanning 140–345 (NILFEAMGIP…MKDVFTWLLE (206 aa)) is the ATP-grasp domain. Residue 169 to 224 (NLSFSYPVFIKPTLGGSSVNTGMAKTAEEAMTLVDKIFVTDDRVLVQKLVSGTEVS) coordinates ATP. 3 residues coordinate Mg(2+): D300, E312, and N314.

This sequence belongs to the D-alanine--D-alanine ligase family. Mg(2+) is required as a cofactor. Requires Mn(2+) as cofactor.

Its subcellular location is the cytoplasm. It carries out the reaction 2 D-alanine + ATP = D-alanyl-D-alanine + ADP + phosphate + H(+). Its pathway is cell wall biogenesis; peptidoglycan biosynthesis. Its function is as follows. Cell wall formation. In Leptospira biflexa serovar Patoc (strain Patoc 1 / Ames), this protein is D-alanine--D-alanine ligase.